The following is a 359-amino-acid chain: Peptide chain release factor 1 (359 aa).

An N5-methylglutamine modification is found at Gln234. The interval 283–305 is disordered; sequence SQKDAARAADRRAQVGSGDRSER.

The protein belongs to the prokaryotic/mitochondrial release factor family. Post-translationally, methylated by PrmC. Methylation increases the termination efficiency of RF1.

It is found in the cytoplasm. In terms of biological role, peptide chain release factor 1 directs the termination of translation in response to the peptide chain termination codons UAG and UAA. In Methylobacterium nodulans (strain LMG 21967 / CNCM I-2342 / ORS 2060), this protein is Peptide chain release factor 1.